The chain runs to 231 residues: Probable cell wall protein ARB_06477 (231 aa).

The N-terminal stretch at 1–17 is a signal peptide; the sequence is MRSVLYLLFTAVAAVAA. Residues 107-206 form a disordered region; that stretch reads TPSFMVDGAT…TGMPTSSGAP (100 aa). A compositionally biased stretch (low complexity) spans 121 to 204; it reads TGPTTSRTSM…SSTGMPTSSG (84 aa). A lipid anchor (GPI-anchor amidated serine) is attached at Ser203. Residues 204-231 constitute a propeptide, removed in mature form; that stretch reads GAPDPNGAVSLALPGGLLSIVLSLMALL.

This sequence belongs to the SRP1/TIP1 family. The GPI-anchor is attached to the protein in the endoplasmic reticulum and serves to target the protein to the cell surface. There, the glucosamine-inositol phospholipid moiety is cleaved off and the GPI-modified mannoprotein is covalently attached via its lipidless GPI glycan remnant to the 1,6-beta-glucan of the outer cell wall layer.

The protein resides in the cell membrane. It localises to the secreted. It is found in the cell wall. Probable component of the cell wall. This is Probable cell wall protein ARB_06477 from Arthroderma benhamiae (strain ATCC MYA-4681 / CBS 112371) (Trichophyton mentagrophytes).